A 345-amino-acid polypeptide reads, in one-letter code: Thylakoid lumenal 29 kDa protein, chloroplastic (345 aa).

This sequence belongs to the peroxidase family.

The protein localises to the plastid. The protein resides in the chloroplast thylakoid lumen. The polypeptide is Thylakoid lumenal 29 kDa protein, chloroplastic (CLEB3J9) (Solanum lycopersicum (Tomato)).